The following is a 197-amino-acid chain: Isopentenyl-diphosphate Delta-isomerase (197 aa).

Positions 41 and 48 each coordinate Mn(2+). One can recognise a Nudix hydrolase domain in the interval 46–183 (QLHRAFSVFL…SWFMTVLDAA (138 aa)). The active site involves cysteine 83. A Mg(2+)-binding site is contributed by cysteine 83. Histidine 85 contacts Mn(2+). Glutamate 103 lines the Mg(2+) pocket. Positions 130 and 132 each coordinate Mn(2+). Glutamate 132 is an active-site residue.

It belongs to the IPP isomerase type 1 family. It depends on Mg(2+) as a cofactor. Mn(2+) is required as a cofactor.

Its subcellular location is the cytoplasm. The catalysed reaction is isopentenyl diphosphate = dimethylallyl diphosphate. The protein operates within isoprenoid biosynthesis; dimethylallyl diphosphate biosynthesis; dimethylallyl diphosphate from isopentenyl diphosphate: step 1/1. In terms of biological role, catalyzes the 1,3-allylic rearrangement of the homoallylic substrate isopentenyl (IPP) to its highly electrophilic allylic isomer, dimethylallyl diphosphate (DMAPP). The chain is Isopentenyl-diphosphate Delta-isomerase from Streptomyces avermitilis (strain ATCC 31267 / DSM 46492 / JCM 5070 / NBRC 14893 / NCIMB 12804 / NRRL 8165 / MA-4680).